Consider the following 852-residue polypeptide: MIQQPTTAKPRISTSSKLNTVLSKNKENVPGKLFKKFKCPSLVISEKRKELPLRKKPRVNYSEYGSVDGKYDSAYVSENVSGLATIKEANRLILNHERRDPSTVIKKQFSVPKPIKGHEDISKLCAHRPPPTLGMKRKVDFIPRPLYDPADEFAIVLYDPTTDADEIIPDIKEVLAEKRKKDELLKNRKGKKEISDSEPESDHDSCVSTDTVASCSTEQSLITSNTSKHRRPNKSLKDLLGIQKEKPPPPPVAVVIDPKLARILRPHQIEGVKFLYKCVTGRIDRCANGCIMADEMGLGKTLQCIALLWTLLKQSPQAGKPTIEKAIITCPSSLVKNWANELVKWLGKDAITPFILDGKSSKQELIMALQQWASVHGRQVTRPVLIASYETLRSYVEHLNNAEIGMLLCDEGHRLKNSDSLTFTALDKLNVQRRVILSGTPIQNDLSEYFSLLNFANPGLLGSRQEFRKNYEIPILKGRDADGTEKDKENGDAKLAELAKIVNRFIIRRTNDILSKYLPVKYEHVVFCNLSEFQLSLYKHFITSPEINKILRGTGSQPLKAIGLLKKICNHPDLLNLTEDLEGCEALFPPGFIPRELRGRDRNIDSSLSGKMLVLERMLYQIKQETDDKIVLISNYTSTLDLFEQLCRARGYKALRLDGTMNVNKRQRLVDTFNDPEKDAFVFLLSSKAGGCGINLIGANRLILFDPDWNPAADQQALARVWRDGQKKDCFVYRFIATGTIEEKIFQRQSHKQSLSSCVVDEAQDVERHFSLDNLRQLFQLNDHTVCETHETYKCKRCRDGKQFIRAPAMLYGDTSTWNHFTNPTLDRIEDHLLKREAGKQQVSTVFQYKSH.

2 short sequence motifs (nuclear localization signal) span residues 35-51 (KKFK…RKEL) and 178-181 (KRKK). Residues 187–205 (NRKGKKEISDSEPESDHDS) are compositionally biased toward basic and acidic residues. Positions 187–208 (NRKGKKEISDSEPESDHDSCVS) are disordered. A Helicase ATP-binding domain is found at 281 to 459 (GRIDRCANGC…FSLLNFANPG (179 aa)). 294 to 301 (DEMGLGKT) contributes to the ATP binding site. The DEGH box signature appears at 410 to 413 (DEGH). Residues 614-767 (VLERMLYQIK…CVVDEAQDVE (154 aa)) enclose the Helicase C-terminal domain.

It belongs to the SNF2/RAD54 helicase family. In terms of assembly, homohexamer. Interacts with rhp51.

The protein resides in the nucleus. It catalyses the reaction ATP + H2O = ADP + phosphate + H(+). Plays an essential role in homologous recombination (HR) which is a major pathway for repairing DNA double-strand breaks (DSBs), single-stranded DNA (ssDNA) gaps, and stalled or collapsed replication forks. Acts as a molecular motor during the homology search and guides RAD51 ssDNA along a donor dsDNA thereby changing the homology search from the diffusion-based mechanism to a motor-guided mechanism. Plays also an essential role in RAD51-mediated synaptic complex formation which consists of three strands encased in a protein filament formed once homology is recognized. Once DNA strand exchange occured, dissociates RAD51 from nucleoprotein filaments formed on dsDNA. The protein is DNA repair protein rhp54 (rhp54) of Schizosaccharomyces pombe (strain 972 / ATCC 24843) (Fission yeast).